The primary structure comprises 504 residues: Signal recognition particle receptor FtsY (504 aa).

2 disordered regions span residues 1 to 71 (MFNW…DDYL) and 116 to 135 (ESDQ…TEIT). GTP contacts are provided by residues 308–315 (GVNGAGKT), 391–395 (DTAGR), and 455–458 (TKLD).

It belongs to the GTP-binding SRP family. FtsY subfamily. In terms of assembly, part of the signal recognition particle protein translocation system, which is composed of SRP and FtsY.

It localises to the cell inner membrane. It is found in the cytoplasm. It carries out the reaction GTP + H2O = GDP + phosphate + H(+). In terms of biological role, involved in targeting and insertion of nascent membrane proteins into the cytoplasmic membrane. Acts as a receptor for the complex formed by the signal recognition particle (SRP) and the ribosome-nascent chain (RNC). In Synechocystis sp. (strain ATCC 27184 / PCC 6803 / Kazusa), this protein is Signal recognition particle receptor FtsY.